Here is a 263-residue protein sequence, read N- to C-terminus: MKNAFKDALKAGRPQIGLWLGLANSYSAELLAGAGFDWLLIDGEHAPNNVQTVLTQLQAIAPYPSQPVVRPSWNDPVQIKQLLDVGAQTLLIPMVQNADEARNAVAATRYPPAGIRGVGSALARASRWNRIPNYLHQANDAMCVLVQIETREAMSNLASILDVDGIDGVFIGPADLSADMGFAGNPQHPEVQAAIENAIVQIRAAGKAPGILMANEALAKRYLELGALFVAVGVDTTLLARGAEALAARFGAEKKLSGASGVY.

The active-site Proton acceptor is H45. Q147 provides a ligand contact to substrate. E149 is an a divalent metal cation binding site. Substrate is bound by residues A174 and D175. D175 lines the a divalent metal cation pocket.

This sequence belongs to the HpcH/HpaI aldolase family. As to quaternary structure, homohexamer; trimer of dimers. A divalent metal cation is required as a cofactor.

The catalysed reaction is 4-hydroxy-2-oxoheptanedioate = succinate semialdehyde + pyruvate. It participates in aromatic compound metabolism; 4-hydroxyphenylacetate degradation; pyruvate and succinate semialdehyde from 4-hydroxyphenylacetate: step 7/7. Its function is as follows. Catalyzes the reversible retro-aldol cleavage of 4-hydroxy-2-ketoheptane-1,7-dioate (HKHD) to pyruvate and succinic semialdehyde. In Salmonella heidelberg (strain SL476), this protein is 4-hydroxy-2-oxo-heptane-1,7-dioate aldolase.